Consider the following 240-residue polypeptide: Ribosomal RNA small subunit methyltransferase G (240 aa).

S-adenosyl-L-methionine-binding positions include G78, F83, 129–130 (AE), and R147. Positions 218-240 (RRQTSKKYPRKPGTPNKSPLLEN) are disordered.

Belongs to the methyltransferase superfamily. RNA methyltransferase RsmG family.

The protein localises to the cytoplasm. Specifically methylates the N7 position of guanine in position 535 of 16S rRNA. The chain is Ribosomal RNA small subunit methyltransferase G from Staphylococcus haemolyticus (strain JCSC1435).